The sequence spans 451 residues: Ribosomal protein uS12 methylthiotransferase RimO (451 aa).

In terms of domain architecture, MTTase N-terminal spans 17-127; the sequence is PTIGFVSLGC…VLAQVHEHLP (111 aa). The [4Fe-4S] cluster site is built by cysteine 26, cysteine 62, cysteine 91, cysteine 160, cysteine 164, and cysteine 167. Residues 146–383 form the Radical SAM core domain; the sequence is LTPRHYAYLK…MQLQQRISTE (238 aa). The 66-residue stretch at 386 to 451 folds into the TRAM domain; the sequence is KQKVGQTLPV…DEYDLWGTRV (66 aa).

The protein belongs to the methylthiotransferase family. RimO subfamily. Requires [4Fe-4S] cluster as cofactor.

The protein resides in the cytoplasm. The catalysed reaction is L-aspartate(89)-[ribosomal protein uS12]-hydrogen + (sulfur carrier)-SH + AH2 + 2 S-adenosyl-L-methionine = 3-methylsulfanyl-L-aspartate(89)-[ribosomal protein uS12]-hydrogen + (sulfur carrier)-H + 5'-deoxyadenosine + L-methionine + A + S-adenosyl-L-homocysteine + 2 H(+). In terms of biological role, catalyzes the methylthiolation of an aspartic acid residue of ribosomal protein uS12. The protein is Ribosomal protein uS12 methylthiotransferase RimO of Cellvibrio japonicus (strain Ueda107) (Pseudomonas fluorescens subsp. cellulosa).